A 912-amino-acid polypeptide reads, in one-letter code: Rho guanine nucleotide exchange factor 1 (912 aa).

The region spanning 41-232 (EQNSQFQSLE…GLYMRHLGVR (192 aa)) is the RGSL domain. The interval 248–413 (KVMGNRRSDE…PDTLHSLPKS (166 aa)) is disordered. Residues 283–313 (DFRHLKAEVDAEKPGATDRKGGVGMPSRDRN) are compositionally biased toward basic and acidic residues. The span at 365–381 (STDEGAETESPEPGDEG) shows a compositional bias: acidic residues. A phosphoserine mark is found at S374 and S409. Positions 416–605 (KRQEVISELL…REILHHVNQA (190 aa)) constitute a DH domain. A PH domain is found at 647–760 (KLVHEGPLTW…WCALITETAG (114 aa)). T695 is subject to Phosphothreonine. Y738 is modified (phosphotyrosine; by JAK2). Disordered regions lie at residues 763 to 802 (KVPA…PADA) and 841 to 865 (AEED…LSPA). Residues 777-789 (PSSTREPLLSSSE) show a composition bias toward low complexity. The residue at position 863 (S863) is a Phosphoserine. A coiled-coil region spans residues 865–896 (ARTQEIQENLLSLEETMKQLEELEEEFCRLRP).

As to quaternary structure, interacts with RHOA, GNA12 and GNA13. Homooligomerizes through the coiled coil region. May interact with CCPG1. Interacts with CTNNAL1. Post-translationally, phosphorylated by PKCA. Angiotensin-2 induced Tyr-738 phosphorylation is mediated by JAK2. In terms of tissue distribution, ubiquitously expressed.

It localises to the cytoplasm. The protein resides in the membrane. Seems to play a role in the regulation of RhoA GTPase by guanine nucleotide-binding alpha-12 (GNA12) and alpha-13 (GNA13) subunits. Acts as a GTPase-activating protein (GAP) for GNA12 and GNA13, and as guanine nucleotide exchange factor (GEF) for RhoA GTPase. Activated G alpha 13/GNA13 stimulates the RhoGEF activity through interaction with the RGS-like domain. This GEF activity is inhibited by binding to activated GNA12. Mediates angiotensin-2-induced RhoA activation. In lymphoid follicles, may trigger activation of GNA13 as part of S1PR2-dependent signaling pathway that leads to inhibition of germinal center (GC) B cell growth and migration outside the GC niche. The polypeptide is Rho guanine nucleotide exchange factor 1 (ARHGEF1) (Homo sapiens (Human)).